A 313-amino-acid chain; its full sequence is GTPase Era (313 aa).

Positions 13–186 constitute an Era-type G domain; sequence RSGFVSFVGR…ADLLVGLLPE (174 aa). Positions 21-28 are G1; that stretch reads GRPNAGKS. 21 to 28 provides a ligand contact to GTP; it reads GRPNAGKS. The interval 47-51 is G2; it reads QTTRT. Positions 68–71 are G3; sequence DTPG. GTP is bound by residues 68-72 and 131-134; these read DTPGL and TKTD. The G4 stretch occupies residues 131–134; the sequence is TKTD. A G5 region spans residues 165 to 167; that stretch reads VSA. Residues 217–299 form the KH type-2 domain; the sequence is LRDELPHSVA…YLDLHVKIAK (83 aa).

The protein belongs to the TRAFAC class TrmE-Era-EngA-EngB-Septin-like GTPase superfamily. Era GTPase family. Monomer.

It localises to the cytoplasm. It is found in the cell membrane. An essential GTPase that binds both GDP and GTP, with rapid nucleotide exchange. Plays a role in 16S rRNA processing and 30S ribosomal subunit biogenesis and possibly also in cell cycle regulation and energy metabolism. This Nocardioides sp. (strain ATCC BAA-499 / JS614) protein is GTPase Era.